Here is a 496-residue protein sequence, read N- to C-terminus: Docking protein 3 (496 aa).

The interval leucine 18–serine 38 is disordered. The region spanning proline 63–phenylalanine 179 is the PH domain. Serine 194 carries the phosphoserine modification. An IRS-type PTB domain is found at glutamate 213–leucine 317. The interval arginine 313–glutamine 363 is disordered. Serine 330 and serine 364 each carry phosphoserine. A Phosphotyrosine modification is found at tyrosine 381. The interval proline 408 to serine 447 is disordered. The residue at position 425 (serine 425) is a Phosphoserine.

It belongs to the DOK family. Type A subfamily. On tyrosine phosphorylation, interacts with CSK and INPP5D/SHIP1 via their SH2 domains. Both Tyr-381 and Tyr-398 are required for interaction with INPP5D. Only Tyr-381 is required for interaction with CSK. Binds ABL1 through the PTB domain and in a kinase-dependent manner. Does not interact with RasGAP. Constitutively tyrosine-phosphorylated. In terms of processing, on IL2 stimulation, phosphorylated on C-terminal tyrosine residues possibly by Src kinases. Can also be phosphorylated by ABL1 kinase. As to expression, expressed in spleen.

It localises to the cytoplasm. The protein localises to the cell membrane. Functionally, DOK proteins are enzymatically inert adaptor or scaffolding proteins. They provide a docking platform for the assembly of multimolecular signaling complexes. DOK3 is a negative regulator of JNK signaling in B-cells through interaction with INPP5D/SHIP1. May modulate ABL1 function. This Homo sapiens (Human) protein is Docking protein 3 (DOK3).